Consider the following 66-residue polypeptide: uncharacterized protein (66 aa).

This is an uncharacterized protein from Schizosaccharomyces pombe (strain 972 / ATCC 24843) (Fission yeast).